Consider the following 329-residue polypeptide: HTH-type transcriptional regulator ArgR (329 aa).

In terms of domain architecture, HTH araC/xylS-type spans 214 to 312 (TQAVLLMEAN…GVTPREDRNQ (99 aa)). 2 consecutive DNA-binding regions (H-T-H motif) follow at residues 231 to 252 (DEIA…KQYL) and 279 to 302 (IIQI…RNFF). Residues 307–329 (REDRNQRRGGSAFETTFTPVERG) are disordered. Over residues 319–329 (FETTFTPVERG) the composition is skewed to polar residues.

ArgR could be a transcriptional activator of the dauBAR operon in response to the presence of L-Arg. In Pseudomonas aeruginosa (strain ATCC 15692 / DSM 22644 / CIP 104116 / JCM 14847 / LMG 12228 / 1C / PRS 101 / PAO1), this protein is HTH-type transcriptional regulator ArgR (argR).